We begin with the raw amino-acid sequence, 649 residues long: Exolysin (649 aa).

A helical membrane pass occupies residues 37–57 (LIYTIIVLVVAAVVGLVIFIV). A coiled-coil region spans residues 184 to 268 (KDIIDNKLRE…KKATDDFKKK (85 aa)). Residues 258-275 (AKKATDDFKKKKQADKNK) show a composition bias toward basic and acidic residues. The interval 258 to 325 (AKKATDDFKK…QFQTRDSKGQ (68 aa)) is disordered. Positions 278–312 (ASKPSPGPKPAPKPSPGPKPAPKPSPGPKPSPGPS) are enriched in pro residues. Residues 407-649 (GGGGGGGNVS…KNVKISKWSP (243 aa)) are catalytic.

It depends on Ca(2+) as a cofactor. Mg(2+) serves as cofactor.

The protein resides in the membrane. It is found in the virion. With respect to regulation, inhibited by Mn(2+), Cu(2+), Co(2+), Fe(2+), Zn(2+), Ni(2+), EDTA and EGTA. In terms of biological role, during viral entry, involved in the degradation of the host cell wall at the site of attachment. The polypeptide is Exolysin (Chlorella (PBCV-1)).